We begin with the raw amino-acid sequence, 270 residues long: Cyclic AMP-dependent transcription factor ATF-1 (270 aa).

The disordered stretch occupies residues 1–91; sequence MEDSHKSNTS…DGENPGVSAV (91 aa). Residues 9 to 21 are compositionally biased toward polar residues; it reads TSETAPQSGSTVQ. One can recognise a KID domain in the interval 31–90; sequence QVSSLSESEESQDSSDSIGSSQKTHGILARRPSYRKILKDLSSEDIRGRKGDGENPGVSA. Phosphoserine; by CaMK1, CDK3, RPS6KA4 and RPS6KA5 is present on Ser-63. Over residues 67–83 the composition is skewed to basic and acidic residues; the sequence is ILKDLSSEDIRGRKGDG. At Ser-197 the chain carries Phosphoserine; by HIPK2. Glycyl lysine isopeptide (Lys-Gly) (interchain with G-Cter in SUMO2) cross-links involve residues Lys-207 and Lys-214. The bZIP domain occupies 212–270; it reads QLKREIRLMKNREAARECRRKKKEYVKCLENRVAVLENQNKTLIEELKTLKDLYSNKSV. Residues 214-238 are basic motif; it reads KREIRLMKNREAARECRRKKKEYVK. The segment at 240-261 is leucine-zipper; sequence LENRVAVLENQNKTLIEELKTL.

This sequence belongs to the bZIP family. ATF subfamily. Binds DNA as a dimer. Interacts with HIPK2 and CDK3. Interacts with MOTS-c, a peptide produced by the mitochondrially encoded 12S rRNA MT-RNR1; the interaction occurs in the nucleus following metabolic stress. In terms of processing, phosphorylated at Ser-197 by HIPK2 in response to genotoxic stress. This phosphorylation promotes transcription repression of FTH1 and other antioxidant detoxification genes. The CDK3-mediated phosphorylation at Ser-63 promotes its transactivation and transcriptional activities. Phosphorylated at Ser-63 by RPS6KA4 and RPS6KA5 in response to mitogenic or stress stimuli.

The protein localises to the nucleus. This protein binds the cAMP response element (CRE) (consensus: 5'-GTGACGT[AC][AG]-3'), a sequence present in many viral and cellular promoters. Mediates PKA-induced stimulation of CRE-reporter genes. Represses the expression of FTH1 and other antioxidant detoxification genes. Triggers cell proliferation and transformation. This chain is Cyclic AMP-dependent transcription factor ATF-1 (ATF1), found in Bos taurus (Bovine).